We begin with the raw amino-acid sequence, 142 residues long: Transcriptional regulator MraZ (142 aa).

SpoVT-AbrB domains follow at residues A5–E51 and A77–T120.

This sequence belongs to the MraZ family. In terms of assembly, forms oligomers.

It is found in the cytoplasm. The protein localises to the nucleoid. The polypeptide is Transcriptional regulator MraZ (Burkholderia multivorans (strain ATCC 17616 / 249)).